Reading from the N-terminus, the 160-residue chain is Probable transcriptional regulator YgiV (160 aa).

Its function is as follows. Represses expression of mcbR. This Escherichia coli (strain K12) protein is Probable transcriptional regulator YgiV (ygiV).